The following is a 261-amino-acid chain: MVSYNVTNVWGLIVFFLCSFAVLAFFSFGKSNLMRLIAHYFNFGYSDKKLKRLDREWRDIQLFKIINGINVSGIENVRMIQQGLIDGKLKTSYFFLTRIWGDITKPPHIIKTIIVILASIFYILLACYIHNEQSVIVRDATGIPYKNMMYYVYSDKVLLSFKNKAVEFNKTYSLADCKRLQNVFIKDTLPEIACNKLLQLNEEDSEWLSQEIKDNNSHKKALLILSLVYFTSGLVIFLSYTKFFYANKKVLEYKASNKNHS.

This is an uncharacterized protein from Enterobacteriaceae (Bacteriophage P2).